A 970-amino-acid chain; its full sequence is Disks large 1 tumor suppressor protein (970 aa).

Positions 4–64 constitute an L27 domain; the sequence is KKQEAHRALE…FYELTLLDDS (61 aa). Residues 161-209 form a disordered region; the sequence is TENAKEPTVEQQQKQQQAQQRSSRSPQQQNPQQQQGSKSRSGSQTVNGD. A compositionally biased stretch (low complexity) spans 171 to 204; sequence QQQKQQQAQQRSSRSPQQQNPQQQQGSKSRSGSQ. PDZ domains follow at residues 216-303 and 330-421; these read DIQL…KRKR and EIDL…GKTQ. The disordered stretch occupies residues 424-477; it reads TTSASGGGGGGLSSGQQLSQSQSQLATSQSQSQVHQQQHATPMVNSQSTEPGSR. Over residues 437–462 the composition is skewed to low complexity; it reads SGQQLSQSQSQLATSQSQSQVHQQQH. Polar residues predominate over residues 466–477; the sequence is MVNSQSTEPGSR. Ser496 carries the post-translational modification Phosphoserine. In terms of domain architecture, PDZ 3 spans 506-587; the sequence is TITIQKGPQG…VVTLLAQYRP (82 aa). Positions 620 to 690 constitute an SH3 domain; that stretch reads KRSLYVRALF…PSKRRWERKM (71 aa). A Phosphothreonine modification is found at Thr714. Residues 780 to 955 form the Guanylate kinase-like domain; the sequence is TRPVIILGPL…IYSKVKSMIW (176 aa).

The protein belongs to the MAGUK family. In terms of tissue distribution, during the cellular blastoderm stage, isoform B, isoform F, isoform H, isoform I and isoform L expression is localized to the cell borders. From stage 11 onwards, expression is found predominantly in the developing nervous system: axon bundles in the ventral cord and the brain. Stage 14 and 15 embryos exhibit expression in the developing body wall muscle. Expression in neuropil regions of the CNS and at NMJs persists through to larval development. Other isoforms show expression in embryonic epithelial cells. In larvae, expression is seen as a belt around salivary glands, imaginal disks and proventriculus. Expressed in adult reproductive tissues. In epithelia, coexpressed with scrib throughout development.

Its subcellular location is the cytoplasm. The protein resides in the cell membrane. The protein localises to the basolateral cell membrane. It localises to the cytoskeleton. It is found in the cell junction. Its subcellular location is the septate junction. In terms of biological role, during embryonic development, some isoforms are essential for proper neuronal differentiation and organization. Required for cell polarity; maintenance of apicobasal polarity. Plays a critical role at septate junctions in cellular growth control during larval development. The presence of a guanylate kinase domain suggests involvement in cellular adhesion as well as signal transduction to control cellular proliferation. This is Disks large 1 tumor suppressor protein (dlg1) from Drosophila melanogaster (Fruit fly).